A 351-amino-acid chain; its full sequence is Blue-sensitive opsin (351 aa).

The Extracellular segment spans residues 1-40 (MKQVPEFHEDFYIPIPLDINNLSAYSPFLVPQDHLGNQGI). Residue asparagine 21 is glycosylated (N-linked (GlcNAc...) asparagine). The helical transmembrane segment at 41 to 65 (FMAMSVFMFFIFIGGASINILTILC) threads the bilayer. The Cytoplasmic segment spans residues 66–77 (TIQFKKLRSHLN). The chain crosses the membrane as a helical span at residues 78–103 (YILVNLSIANLFVAIFGSPLSFYSFF). Residues 104–117 (NRYFIFGATACKIE) are Extracellular-facing. A disulfide bridge connects residues cysteine 114 and cysteine 191. A helical transmembrane segment spans residues 118–137 (GFLATLGGMVGLWSLAVVAF). The Cytoplasmic segment spans residues 138–156 (ERWLVICKPLGNFTFKTPH). The chain crosses the membrane as a helical span at residues 157–180 (AIAGCILPWISALAASLPPLFGWS). Residues 181–206 (RYIPEGLQCSCGPDWYTTNNKYNNES) lie on the Extracellular side of the membrane. Residues 207–234 (YVMFLFCFCFAVPFGTIVFCYGQLLITL) traverse the membrane as a helical segment. Residues 235-256 (KLAAKAQADSASTQKAEREVTK) lie on the Cytoplasmic side of the membrane. A helical transmembrane segment spans residues 257–280 (MVVVMVLGFLVCWAPYASFSLWIV). Residues 281-288 (SHRGEEFD) are Extracellular-facing. Residues 289-313 (LRMATIPSCLSKASTVYNPVIYVLM) traverse the membrane as a helical segment. Lysine 300 is modified (N6-(retinylidene)lysine). At 314 to 351 (NKQFRSCMMKMVCGKNIEEDEASTSSQVTQVSSVAPEK) the chain is on the cytoplasmic side.

This sequence belongs to the G-protein coupled receptor 1 family. Opsin subfamily. Phosphorylated on some or all of the serine and threonine residues present in the C-terminal region. In terms of tissue distribution, the color pigments are found in the cone photoreceptor cells.

It is found in the membrane. Functionally, visual pigments are the light-absorbing molecules that mediate vision. They consist of an apoprotein, opsin, covalently linked to cis-retinal. This is Blue-sensitive opsin from Carassius auratus (Goldfish).